The following is a 740-amino-acid chain: Alpha-1,6-mannosylglycoprotein 6-beta-N-acetylglucosaminyltransferase A (740 aa).

Residues 1 to 13 lie on the Cytoplasmic side of the membrane; the sequence is MAFFSPWKLSSQK. Residues 14–30 traverse the membrane as a helical; Signal-anchor for type II membrane protein segment; sequence LGFFLVTFGFIWGMMLL. Residues 31–740 are Lumenal-facing; sequence HFTIQQRTQP…GQVALCKDCL (710 aa). Residues Asn-109, Asn-114, and Asn-117 are each glycosylated (N-linked (GlcNAc...) asparagine). 9 disulfide bridges follow: Cys-144-Cys-182, Cys-155-Cys-195, Cys-171-Cys-337, Cys-371-Cys-625, Cys-648-Cys-723, Cys-652-Cys-725, Cys-659-Cys-712, Cys-680-Cys-701, and Cys-736-Cys-739. Residues 212–740 form a sufficient for catalytic activity region; that stretch reads NSLAEIRTDF…GQVALCKDCL (529 aa). Asn-333 is a glycosylation site (N-linked (GlcNAc...) asparagine). Position 377-378 (377-378) interacts with substrate; sequence DS. Residues Asn-432 and Asn-446 are each glycosylated (N-linked (GlcNAc...) asparagine). Glu-525 serves as a coordination point for UDP-N-acetyl-alpha-D-glucosamine. Lys-553 serves as a coordination point for substrate.

Belongs to the glycosyltransferase 18 family. N-glycosylated. Post-translationally, a secreted form is released from the membrane after cleavage by gamma-secretase. As to expression, detected in cerebellum.

It localises to the golgi apparatus membrane. The protein resides in the perikaryon. It is found in the secreted. It carries out the reaction N(4)-{beta-D-GlcNAc-(1-&gt;2)-[beta-D-GlcNAc-(1-&gt;4)]-alpha-D-Man-(1-&gt;3)-[beta-D-GlcNAc-(1-&gt;2)-alpha-D-Man-(1-&gt;6)]-beta-D-Man-(1-&gt;4)-beta-D-GlcNAc-(1-&gt;4)-beta-D-GlcNAc}-L-asparaginyl-[protein] + UDP-N-acetyl-alpha-D-glucosamine = N(4)-{beta-D-GlcNAc-(1-&gt;2)-[beta-D-GlcNAc-(1-&gt;4)]-alpha-D-Man-(1-&gt;3)-[beta-D-GlcNAc-(1-&gt;2)-[beta-D-GlcNAc-(1-&gt;6)]-alpha-D-Man-(1-&gt;6)]-beta-D-Man-(1-&gt;4)-beta-D-GlcNAc-(1-&gt;4)-beta-D-GlcNAc}-L-asparaginyl-[protein] + UDP + H(+). It participates in protein modification; protein glycosylation. In terms of biological role, catalyzes the addition of N-acetylglucosamine (GlcNAc) in beta 1-6 linkage to the alpha-linked mannose of biantennary N-linked oligosaccharides. Catalyzes an important step in the biosynthesis of branched, complex-type N-glycans, such as those found on EGFR, TGFR (TGF-beta receptor) and CDH2. Via its role in the biosynthesis of complex N-glycans, plays an important role in the activation of cellular signaling pathways, reorganization of the actin cytoskeleton, cell-cell adhesion and cell migration. MGAT5-dependent EGFR N-glycosylation enhances the interaction between EGFR and LGALS3 and thereby prevents rapid EGFR endocytosis and prolongs EGFR signaling. Required for efficient interaction between TGFB1 and its receptor. Enhances activation of intracellular signaling pathways by several types of growth factors, including FGF2, PDGF, IGF, TGFB1 and EGF. MGAT5-dependent CDH2 N-glycosylation inhibits CDH2-mediated homotypic cell-cell adhesion and contributes to the regulation of downstream signaling pathways. Promotes cell migration. Contributes to the regulation of the inflammatory response. MGAT5-dependent TCR N-glycosylation enhances the interaction between TCR and LGALS3, limits agonist-induced TCR clustering, and thereby dampens TCR-mediated responses to antigens. Required for normal leukocyte evasation and accumulation at sites of inflammation. Inhibits attachment of monocytes to the vascular endothelium and subsequent monocyte diapedesis. Promotes proliferation of umbilical vein endothelial cells and angiogenesis, at least in part by promoting the release of the growth factor FGF2 from the extracellular matrix. The polypeptide is Alpha-1,6-mannosylglycoprotein 6-beta-N-acetylglucosaminyltransferase A (Mgat5) (Mus musculus (Mouse)).